Reading from the N-terminus, the 192-residue chain is MQSGNLWRALGLCLLLVGAWAQDADEQKPYEVSISGNTVELTCPREFEGEIHWKQNDEQMKGYTGKQLLLENFSEMDNSGYYQCYMTEGNKEAAHTLYLKARVCQNCMEVNLMEVATIIVVDICVTLGLLLLVYYWSKSRKAKASPMTRGAGAGGRPRGQNKGRPPPVPNPDYEPIRKGQRDLYAGLNQRGV.

An N-terminal signal peptide occupies residues 1–21 (MQSGNLWRALGLCLLLVGAWA). The Extracellular portion of the chain corresponds to 23-114 (DADEQKPYEV…QNCMEVNLME (92 aa)). One can recognise an Ig-like domain in the interval 26-97 (EQKPYEVSIS…EGNKEAAHTL (72 aa)). Residues Cys-43 and Cys-84 are joined by a disulfide bond. An N-linked (GlcNAc...) asparagine glycan is attached at Asn-72. The helical transmembrane segment at 115 to 135 (VATIIVVDICVTLGLLLLVYY) threads the bilayer. Topologically, residues 136-192 (WSKSRKAKASPMTRGAGAGGRPRGQNKGRPPPVPNPDYEPIRKGQRDLYAGLNQRGV) are cytoplasmic. Residues 145–180 (SPMTRGAGAGGRPRGQNKGRPPPVPNPDYEPIRKGQ) form a disordered region. Positions 160–177 (QNKGRPPPVPNPDYEPIR) are NUMB-binding region. The 28-residue stretch at 163 to 190 (GRPPPVPNPDYEPIRKGQRDLYAGLNQR) folds into the ITAM domain. The tract at residues 164-171 (RPPPVPNP) is proline-rich sequence. Tyr-173 and Tyr-184 each carry phosphotyrosine.

In terms of assembly, the TCR-CD3 complex is composed of a CD3D/CD3E and a CD3G/CD3E heterodimers that preferentially associate with TCRalpha and TCRbeta, respectively, to form TCRalpha/CD3E/CD3G and TCRbeta/CD3G/CD3E trimers. In turn, the hexamer interacts with CD3Z homodimer to form the TCR-CD3 complex. Alternatively, TCRalpha and TCRbeta can be replaced by TCRgamma and TCRdelta. Interacts with CD6. Interacts (via Proline-rich sequence) with NCK1; the interaction is ligand dependent but independent of tyrosine kinase activation. In terms of processing, phosphorylated on Tyr residues after T-cell receptor triggering by LCK in association with CD4/CD8.

The protein localises to the cell membrane. In terms of biological role, part of the TCR-CD3 complex present on T-lymphocyte cell surface that plays an essential role in adaptive immune response. When antigen presenting cells (APCs) activate T-cell receptor (TCR), TCR-mediated signals are transmitted across the cell membrane by the CD3 chains CD3D, CD3E, CD3G and CD3Z. All CD3 chains contain immunoreceptor tyrosine-based activation motifs (ITAMs) in their cytoplasmic domain. Upon TCR engagement, these motifs become phosphorylated by Src family protein tyrosine kinases LCK and FYN, resulting in the activation of downstream signaling pathways. In addition of this role of signal transduction in T-cell activation, CD3E plays an essential role in correct T-cell development. Also participates in internalization and cell surface down-regulation of TCR-CD3 complexes via endocytosis sequences present in CD3E cytosolic region. In addition to its role as a TCR coreceptor, it serves as a receptor for ITPRIPL1. Ligand recognition inhibits T-cell activation by promoting interaction with NCK1, which prevents CD3E-ZAP70 interaction and blocks the ERK-NFkB signaling cascade and calcium influx. The protein is T-cell surface glycoprotein CD3 epsilon chain (CD3E) of Bos taurus (Bovine).